Here is a 219-residue protein sequence, read N- to C-terminus: Cytidylate kinase (219 aa).

15–23 contacts ATP; the sequence is GPAASGKGT.

Belongs to the cytidylate kinase family. Type 1 subfamily.

The protein localises to the cytoplasm. The enzyme catalyses CMP + ATP = CDP + ADP. The catalysed reaction is dCMP + ATP = dCDP + ADP. This Brucella suis biovar 1 (strain 1330) protein is Cytidylate kinase.